A 190-amino-acid polypeptide reads, in one-letter code: Protein SYM1 (190 aa).

The next 4 helical transmembrane spans lie at 16–36 (PVLGNMISSAVLFGTGDVIAQ), 54–74 (IVTWGGILFAPTVNLWFRTLE), 91–111 (LDQFGFAPVILSGFFTAMTFM), and 131–151 (LQANWMLFIPFQILNMGLVPL).

The protein belongs to the peroxisomal membrane protein PXMP2/4 family.

The protein localises to the mitochondrion inner membrane. In terms of biological role, may be involved in cellular response to stress. Required to maintain mitochondrial DNA (mtDNA) integrity and stability. This Cryptococcus neoformans var. neoformans serotype D (strain B-3501A) (Filobasidiella neoformans) protein is Protein SYM1 (SYM1).